Reading from the N-terminus, the 441-residue chain is Protein disulfide isomerase-like 2-3 (441 aa).

A signal peptide spans 1 to 18 (MRPAVAAALLLVAAAVAA). Thioredoxin domains follow at residues 19-139 (SPVS…ALLR) and 159-276 (SEKT…ANAA). Residues cysteine 59 and cysteine 62 each act as nucleophile in the active site. Cysteine 59 and cysteine 62 form a disulfide bridge. Residues 143 to 166 (NGKTSAGSGGKKSGGSSEKTEPSA) form a disordered region. Residues cysteine 195 and cysteine 198 each act as nucleophile in the active site. A disulfide bond links cysteine 195 and cysteine 198.

It belongs to the protein disulfide isomerase family.

The protein localises to the endoplasmic reticulum lumen. The enzyme catalyses Catalyzes the rearrangement of -S-S- bonds in proteins.. Acts as a protein-folding catalyst that interacts with nascent polypeptides to catalyze the formation, isomerization, and reduction or oxidation of disulfide bonds. May play a role in storage protein biogenesis. This is Protein disulfide isomerase-like 2-3 (PDIL2-3) from Oryza sativa subsp. japonica (Rice).